Consider the following 163-residue polypeptide: Probable calcium-binding protein CML26 (163 aa).

Alanine 2 carries the post-translational modification N-acetylalanine. EF-hand domains follow at residues 16-51 (STDM…MGTS), 52-82 (YTEE…TICR), 85-120 (SSAV…LGMT), and 121-156 (CSVE…PELV). 18 residues coordinate Ca(2+): aspartate 29, asparagine 31, aspartate 33, lysine 35, glutamate 40, aspartate 65, aspartate 67, aspartate 69, glutamate 76, aspartate 98, asparagine 100, asparagine 102, glutamate 109, aspartate 134, aspartate 136, aspartate 138, asparagine 140, and glutamate 145.

Potential calcium sensor. The chain is Probable calcium-binding protein CML26 (CML26) from Arabidopsis thaliana (Mouse-ear cress).